We begin with the raw amino-acid sequence, 405 residues long: Acetate kinase (405 aa).

Position 7 (Asn-7) interacts with Mg(2+). Residue Lys-14 coordinates ATP. Arg-98 contributes to the substrate binding site. Asp-155 (proton donor/acceptor) is an active-site residue. Residues 214-218 (HLGNG), 289-291 (DLR), and 337-341 (GVGEN) contribute to the ATP site. A Mg(2+)-binding site is contributed by Glu-390.

This sequence belongs to the acetokinase family. As to quaternary structure, homodimer. It depends on Mg(2+) as a cofactor. The cofactor is Mn(2+).

Its subcellular location is the cytoplasm. The enzyme catalyses acetate + ATP = acetyl phosphate + ADP. It participates in metabolic intermediate biosynthesis; acetyl-CoA biosynthesis; acetyl-CoA from acetate: step 1/2. In terms of biological role, catalyzes the formation of acetyl phosphate from acetate and ATP. Can also catalyze the reverse reaction. The polypeptide is Acetate kinase (Gloeothece citriformis (strain PCC 7424) (Cyanothece sp. (strain PCC 7424))).